Consider the following 765-residue polypeptide: Phosphoribosylformylglycinamidine synthase subunit PurL (765 aa).

Histidine 59 is a catalytic residue. Positions 62 and 104 each coordinate ATP. Position 106 (glutamate 106) interacts with Mg(2+). Residues 107-110 and arginine 129 contribute to the substrate site; that span reads SHNH. Histidine 108 serves as the catalytic Proton acceptor. Mg(2+) is bound at residue aspartate 130. Glutamine 254 provides a ligand contact to substrate. A Mg(2+)-binding site is contributed by aspartate 282. 326 to 328 contacts substrate; sequence ESQ. Positions 522 and 559 each coordinate ATP. Asparagine 560 is a Mg(2+) binding site. Serine 562 serves as a coordination point for substrate.

This sequence belongs to the FGAMS family. As to quaternary structure, monomer. Part of the FGAM synthase complex composed of 1 PurL, 1 PurQ and 2 PurS subunits.

It is found in the cytoplasm. The enzyme catalyses N(2)-formyl-N(1)-(5-phospho-beta-D-ribosyl)glycinamide + L-glutamine + ATP + H2O = 2-formamido-N(1)-(5-O-phospho-beta-D-ribosyl)acetamidine + L-glutamate + ADP + phosphate + H(+). It participates in purine metabolism; IMP biosynthesis via de novo pathway; 5-amino-1-(5-phospho-D-ribosyl)imidazole from N(2)-formyl-N(1)-(5-phospho-D-ribosyl)glycinamide: step 1/2. Part of the phosphoribosylformylglycinamidine synthase complex involved in the purines biosynthetic pathway. Catalyzes the ATP-dependent conversion of formylglycinamide ribonucleotide (FGAR) and glutamine to yield formylglycinamidine ribonucleotide (FGAM) and glutamate. The FGAM synthase complex is composed of three subunits. PurQ produces an ammonia molecule by converting glutamine to glutamate. PurL transfers the ammonia molecule to FGAR to form FGAM in an ATP-dependent manner. PurS interacts with PurQ and PurL and is thought to assist in the transfer of the ammonia molecule from PurQ to PurL. This is Phosphoribosylformylglycinamidine synthase subunit PurL from Thermobifida fusca (strain YX).